We begin with the raw amino-acid sequence, 431 residues long: Tol-Pal system protein TolB (431 aa).

An N-terminal signal peptide occupies residues 1–19 (MKRLLFFLICVFFSKTSYS).

The protein belongs to the TolB family. The Tol-Pal system is composed of five core proteins: the inner membrane proteins TolA, TolQ and TolR, the periplasmic protein TolB and the outer membrane protein Pal. They form a network linking the inner and outer membranes and the peptidoglycan layer.

Its subcellular location is the periplasm. Its function is as follows. Part of the Tol-Pal system, which plays a role in outer membrane invagination during cell division and is important for maintaining outer membrane integrity. TolB occupies a key intermediary position in the Tol-Pal system because it communicates directly with both membrane-embedded components, Pal in the outer membrane and TolA in the inner membrane. In Wigglesworthia glossinidia brevipalpis, this protein is Tol-Pal system protein TolB.